A 256-amino-acid chain; its full sequence is Lysine-rich coiled-coil protein 1 (256 aa).

2 disordered regions span residues 61-83 and 141-256; these read QRIP…TEDR and GHST…ILGF. Composition is skewed to polar residues over residues 64–79 and 141–153; these read PSGT…SSSQ and GHST…SHRQ. Composition is skewed to basic and acidic residues over residues 161–188 and 218–227; these read HLEE…DLNK and KNRDVSSKKE. Residues 208–247 adopt a coiled-coil conformation; it reads TEKLKNRKEKKNRDVSSKKEDRKRRKEKKEQGEERTEEEM.

This is Lysine-rich coiled-coil protein 1 (Krcc1) from Rattus norvegicus (Rat).